A 740-amino-acid polypeptide reads, in one-letter code: Ethylene receptor 1 (740 aa).

3 helical membrane-spanning segments follow: residues 23-43 (ISDF…IYFV), 53-73 (WVLV…LINL), and 92-112 (VLTA…IPDL). The Cu cation site is built by Cys65 and His69. In terms of domain architecture, GAF spans 158–307 (DRHTILKTTL…VVADQVAVAL (150 aa)). The Histidine kinase domain occupies 350 to 588 (VMNHEMRTPM…TFIVKLGIAE (239 aa)). At His353 the chain carries Phosphohistidine; by autocatalysis. A Response regulatory domain is found at 614 to 731 (KVLVMDDNGV…KMRSVLSELI (118 aa)). The residue at position 662 (Asp662) is a 4-aspartylphosphate.

The protein belongs to the ethylene receptor family. In terms of assembly, homodimer; disulfide-linked. Cu cation is required as a cofactor. Post-translationally, activation probably requires a transfer of a phosphate group between a His in the transmitter domain and an Asp of the receiver domain.

The protein resides in the endoplasmic reticulum membrane. The catalysed reaction is ATP + protein L-histidine = ADP + protein N-phospho-L-histidine.. Functionally, may act early in the ethylene signal transduction pathway, possibly as an ethylene receptor, or as a regulator of the pathway. The sequence is that of Ethylene receptor 1 (ETR1) from Cucumis sativus (Cucumber).